The sequence spans 155 residues: D-aminoacyl-tRNA deacylase (155 aa).

Positions 137–138 (GP) match the Gly-cisPro motif, important for rejection of L-amino acids motif.

This sequence belongs to the DTD family. In terms of assembly, homodimer.

The protein resides in the cytoplasm. It catalyses the reaction glycyl-tRNA(Ala) + H2O = tRNA(Ala) + glycine + H(+). It carries out the reaction a D-aminoacyl-tRNA + H2O = a tRNA + a D-alpha-amino acid + H(+). Functionally, an aminoacyl-tRNA editing enzyme that deacylates mischarged D-aminoacyl-tRNAs. Also deacylates mischarged glycyl-tRNA(Ala), protecting cells against glycine mischarging by AlaRS. Acts via tRNA-based rather than protein-based catalysis; rejects L-amino acids rather than detecting D-amino acids in the active site. By recycling D-aminoacyl-tRNA to D-amino acids and free tRNA molecules, this enzyme counteracts the toxicity associated with the formation of D-aminoacyl-tRNA entities in vivo and helps enforce protein L-homochirality. The polypeptide is D-aminoacyl-tRNA deacylase (Nitrosococcus oceani (strain ATCC 19707 / BCRC 17464 / JCM 30415 / NCIMB 11848 / C-107)).